The chain runs to 396 residues: S-adenosylmethionine synthase (396 aa).

His-15 is an ATP binding site. Asp-17 is a binding site for Mg(2+). Glu-43 provides a ligand contact to K(+). 2 residues coordinate L-methionine: Glu-56 and Gln-99. A flexible loop region spans residues 99-109 (QSSDIAMGVDK). ATP is bound by residues 175–177 (DGK), 241–242 (RF), Asp-250, 256–257 (RK), Ala-273, and Lys-277. Asp-250 contributes to the L-methionine binding site. Lys-281 serves as a coordination point for L-methionine.

The protein belongs to the AdoMet synthase family. Homotetramer; dimer of dimers. It depends on Mg(2+) as a cofactor. K(+) is required as a cofactor.

It is found in the cytoplasm. It carries out the reaction L-methionine + ATP + H2O = S-adenosyl-L-methionine + phosphate + diphosphate. It functions in the pathway amino-acid biosynthesis; S-adenosyl-L-methionine biosynthesis; S-adenosyl-L-methionine from L-methionine: step 1/1. Catalyzes the formation of S-adenosylmethionine (AdoMet) from methionine and ATP. The overall synthetic reaction is composed of two sequential steps, AdoMet formation and the subsequent tripolyphosphate hydrolysis which occurs prior to release of AdoMet from the enzyme. The chain is S-adenosylmethionine synthase from Ruminiclostridium cellulolyticum (strain ATCC 35319 / DSM 5812 / JCM 6584 / H10) (Clostridium cellulolyticum).